The primary structure comprises 217 residues: Pyridoxine/pyridoxamine 5'-phosphate oxidase (217 aa).

Residues 66-71 (RMVLLK), 81-82 (FT), Arg-87, Lys-88, and Gln-110 each bind FMN. Residue Lys-71 coordinates substrate. Substrate-binding residues include Tyr-128, Arg-132, and Ser-136. Residues 145 to 146 (QS) and Trp-190 each bind FMN. 196–198 (RLH) contacts substrate. Arg-200 lines the FMN pocket.

Belongs to the pyridoxamine 5'-phosphate oxidase family. As to quaternary structure, homodimer. FMN serves as cofactor.

The enzyme catalyses pyridoxamine 5'-phosphate + O2 + H2O = pyridoxal 5'-phosphate + H2O2 + NH4(+). It carries out the reaction pyridoxine 5'-phosphate + O2 = pyridoxal 5'-phosphate + H2O2. It functions in the pathway cofactor metabolism; pyridoxal 5'-phosphate salvage; pyridoxal 5'-phosphate from pyridoxamine 5'-phosphate: step 1/1. The protein operates within cofactor metabolism; pyridoxal 5'-phosphate salvage; pyridoxal 5'-phosphate from pyridoxine 5'-phosphate: step 1/1. Functionally, catalyzes the oxidation of either pyridoxine 5'-phosphate (PNP) or pyridoxamine 5'-phosphate (PMP) into pyridoxal 5'-phosphate (PLP). This chain is Pyridoxine/pyridoxamine 5'-phosphate oxidase, found in Psychromonas ingrahamii (strain DSM 17664 / CCUG 51855 / 37).